Reading from the N-terminus, the 563-residue chain is MANAISNPASFIGVHSPIAQIRIPRLCVAKGMPTPIAQRDIILQDQIQLENTCIRHAKALKEARLAFSKVRKDHSQNLIMIDALQRLGIDYHFQEETQDVLEGQYNKIFAAHQQHHLSDAALRFRLLRQQGYYVPASDVFSELKNREGKFKQELAADIKGLMELYEASQLSIQEENILDEAGAFSAHFLNCWTPHLCDHQTRIVSNTLKHPFHRTLARSTIKNFLHFYNFQGENEYIQTFTELAKLDFNMIQSIHRQEINQVSNWWNNLGLASELKFARDQPEKWCMWPLVGVTDPSLSWQRIELAKPVSLVYLIDDIFDLGGTPDQLTLFTEAVNRWEITATEDLPYHMKICFRALYDVTNQIAYKVYKKHQYNPIHSLKKAWARLCNAFLEEAKWFAAGKLPKADEYLNTAIVTSGVHLVLVHTFFLMGDGITDQTINLLNNDDPGIISSVATILRLWDDLGSAQDENQDGYDGSYIECYMKDFPGTSVRDARNHVISMISDTWKKLNQHCLSPNPFSGSFIRATLNGARMVPLMYDFDSNHNLPILQQNIKSLLFESVAI.

Mg(2+)-binding residues include aspartate 316, aspartate 320, and glutamate 469. The DDXXD motif motif lies at 316-320; sequence DDIFD.

The protein belongs to the terpene synthase family. Mg(2+) is required as a cofactor.

In terms of biological role, probable sesquiterpene synthase. In Ricinus communis (Castor bean), this protein is Probable terpene synthase 4 (TPS4).